Here is a 632-residue protein sequence, read N- to C-terminus: Extracellular metalloproteinase 2 (632 aa).

The first 19 residues, 1–19 (MHGLLLAGLAVALPLGVAG), serve as a signal peptide directing secretion. The propeptide occupies 20–244 (HPARPQTALS…VHNVVDYVAS (225 aa)). A glycan (N-linked (GlcNAc...) asparagine) is linked at Asn270. Residues 294 to 310 (NNVAAQDNPSGGSQWEN) show a composition bias toward polar residues. Residues 294–313 (NNVAAQDNPSGGSQWENNYR) form a disordered region. His429 is a Zn(2+) binding site. Glu430 is a catalytic residue. Zn(2+) is bound at residue His433.

The protein belongs to the peptidase M36 family. Requires Zn(2+) as cofactor.

It is found in the secreted. Secreted metalloproteinase probably acting as a virulence factor. The polypeptide is Extracellular metalloproteinase 2 (MEP2) (Arthroderma otae (Microsporum canis)).